A 212-amino-acid chain; its full sequence is NAD(P)H dehydrogenase (quinone) 3 (212 aa).

The 189-residue stretch at 4-192 (MLVLYYSSYG…DGARFQGRHV (189 aa)) folds into the Flavodoxin-like domain. FMN is bound by residues 10–15 (SSYGHI) and 78–80 (TRF). Residue tyrosine 12 coordinates NAD(+). Tryptophan 98 contributes to the substrate binding site. FMN contacts are provided by residues 113–119 (STGSQHG) and histidine 134. Residues 161 to 182 (YGASTLAEDENHRDRSPSANEL) are disordered.

This sequence belongs to the WrbA family. FMN serves as cofactor.

The catalysed reaction is a quinone + NADH + H(+) = a quinol + NAD(+). It carries out the reaction a quinone + NADPH + H(+) = a quinol + NADP(+). This Rhizobium meliloti (strain 1021) (Ensifer meliloti) protein is NAD(P)H dehydrogenase (quinone) 3.